A 1439-amino-acid polypeptide reads, in one-letter code: Fanconi anemia group D2 protein (1439 aa).

Residue K563 forms a Glycyl lysine isopeptide (Lys-Gly) (interchain with G-Cter in ubiquitin) linkage.

This sequence belongs to the Fanconi anemia protein FANCD2 family. Homodimer; cannot be ubiquitinated and does not bind DNA. Part of a FANCI-FANCD2 heterodimeric complex that binds and scans dsDNA for DNA damage. Interacts directly with FANCE and FANCI. Interacts with USP1 and MEN1. The ubiquitinated form specifically interacts with BRCA1 and BLM. Both the nonubiquitinated and the monoubiquitinated forms interact with BRCA2; this interaction is mediated by phosphorylated FANCG and the complex also includes XCCR3. The ubiquitinated form specifically interacts with MTMR15/FAN1 (via UBZ-type zinc finger), leading to recruit MTMR15/FAN1 to sites of DNA damage. Interacts with DCLRE1B/Apollo. Interacts with POLN. Interacts with UHRF1 and UHRF2; these interactions promote FANCD2 activation. In terms of processing, monoubiquitinated on Lys-563 during S phase and upon genotoxic stress. Deubiquitinated by USP1 as cells enter G2/M, or once DNA repair is completed. Monoubiquitination prevents DNA release from the FANCI-FANCD2 complex. FANCD2 is only ubiquitinated in the FANCI-FANCD2 complex and the monoubiquitination of FANCD2 is promoted by phosphorylation of FANCI. Post-translationally, phosphorylated in response to various genotoxic stresses by ATM and/or ATR.

It localises to the nucleus. Functionally, required for maintenance of chromosomal stability. Promotes accurate and efficient pairing of homologs during meiosis. Involved in the repair of DNA double-strand breaks, both by homologous recombination and single-strand annealing. The FANCI-FANCD2 complex binds and scans double-stranded DNA (dsDNA) for DNA damage; this complex stalls at DNA junctions between double-stranded DNA and single-stranded DNA. May participate in S phase and G2 phase checkpoint activation upon DNA damage. Plays a role in preventing breakage and loss of missegregating chromatin at the end of cell division, particularly after replication stress. Required for the targeting, or stabilization, of BLM to non-centromeric abnormal structures induced by replicative stress. Promotes BRCA2/FANCD1 loading onto damaged chromatin. May also be involved in B-cell immunoglobulin isotype switching. The chain is Fanconi anemia group D2 protein from Gallus gallus (Chicken).